The following is a 387-amino-acid chain: Exodeoxyribonuclease 7 large subunit (387 aa).

This sequence belongs to the XseA family. Heterooligomer composed of large and small subunits.

It is found in the cytoplasm. It catalyses the reaction Exonucleolytic cleavage in either 5'- to 3'- or 3'- to 5'-direction to yield nucleoside 5'-phosphates.. Functionally, bidirectionally degrades single-stranded DNA into large acid-insoluble oligonucleotides, which are then degraded further into small acid-soluble oligonucleotides. The sequence is that of Exodeoxyribonuclease 7 large subunit from Campylobacter hominis (strain ATCC BAA-381 / DSM 21671 / CCUG 45161 / LMG 19568 / NCTC 13146 / CH001A).